The chain runs to 151 residues: Peptide deformylase (151 aa).

2 residues coordinate Fe cation: Cys-88 and His-130. The active site involves Glu-131. Residue His-134 participates in Fe cation binding.

The protein belongs to the polypeptide deformylase family. Fe(2+) serves as cofactor.

The enzyme catalyses N-terminal N-formyl-L-methionyl-[peptide] + H2O = N-terminal L-methionyl-[peptide] + formate. Functionally, removes the formyl group from the N-terminal Met of newly synthesized proteins. Requires at least a dipeptide for an efficient rate of reaction. N-terminal L-methionine is a prerequisite for activity but the enzyme has broad specificity at other positions. The chain is Peptide deformylase from Heliobacterium modesticaldum (strain ATCC 51547 / Ice1).